The primary structure comprises 443 residues: Glutamine synthetase (443 aa).

The region spanning 16-101 is the GS beta-grasp domain; that stretch reads NGVKFIRLQF…LICDVYKPDG (86 aa). The GS catalytic domain occupies 108-443; it reads PRHVLKRANA…WELENYLNKY (336 aa). Mg(2+) contacts are provided by glutamate 131 and glutamate 133. Glutamate 183 contacts ATP. Positions 188 and 195 each coordinate Mg(2+). L-glutamate contacts are provided by residues 239 to 240 and glycine 240; that span reads NG. A Mg(2+)-binding site is contributed by histidine 244. Residue serine 248 coordinates ATP. Arginine 297, glutamate 303, and arginine 315 together coordinate L-glutamate. The ATP site is built by arginine 315 and arginine 320. Glutamate 332 contributes to the Mg(2+) binding site. Arginine 334 lines the L-glutamate pocket.

It belongs to the glutamine synthetase family. As to quaternary structure, oligomer of 12 subunits arranged in the form of two hexagons. In its feedback-inhibited form, interacts with TnrA in order to block its DNA-binding activity. Requires Mg(2+) as cofactor.

It localises to the cytoplasm. The catalysed reaction is L-glutamate + NH4(+) + ATP = L-glutamine + ADP + phosphate + H(+). With respect to regulation, inhibited by glutamine. Its function is as follows. Glutamine synthetase (GS) is an unusual multitasking protein that functions as an enzyme, a transcription coregulator, and a chaperone in ammonium assimilation and in the regulation of genes involved in nitrogen metabolism. It catalyzes the ATP-dependent biosynthesis of glutamine from glutamate and ammonia. Feedback-inhibited GlnA also interacts with and regulates the activity of the transcriptional regulator TnrA. During nitrogen limitation, TnrA is in its DNA-binding active state and turns on the transcription of genes required for nitrogen assimilation. Under conditions of nitrogen excess, feedback-inhibited GlnA forms a stable complex with TnrA, which inhibits its DNA-binding activity. In contrast, feedback-inhibited GlnA acts as a chaperone to stabilize the DNA-binding activity of GlnR, which represses the transcription of nitrogen assimilation genes. The chain is Glutamine synthetase from Clostridium saccharobutylicum.